The chain runs to 179 residues: Large ribosomal subunit protein bL25 (179 aa).

The protein belongs to the bacterial ribosomal protein bL25 family. CTC subfamily. In terms of assembly, part of the 50S ribosomal subunit; part of the 5S rRNA/L5/L18/L25 subcomplex. Contacts the 5S rRNA. Binds to the 5S rRNA independently of L5 and L18.

In terms of biological role, this is one of the proteins that binds to the 5S RNA in the ribosome where it forms part of the central protuberance. The chain is Large ribosomal subunit protein bL25 from Desulfitobacterium hafniense (strain DSM 10664 / DCB-2).